The sequence spans 239 residues: tRNA (guanine-N(7)-)-methyltransferase (239 aa).

Glutamate 69, glutamate 94, aspartate 121, and aspartate 144 together coordinate S-adenosyl-L-methionine. Aspartate 144 is an active-site residue. Residues lysine 148, aspartate 180, and 217–220 (TKFE) each bind substrate.

This sequence belongs to the class I-like SAM-binding methyltransferase superfamily. TrmB family. Monomer.

It carries out the reaction guanosine(46) in tRNA + S-adenosyl-L-methionine = N(7)-methylguanosine(46) in tRNA + S-adenosyl-L-homocysteine. It participates in tRNA modification; N(7)-methylguanine-tRNA biosynthesis. In terms of biological role, catalyzes the formation of N(7)-methylguanine at position 46 (m7G46) in tRNA. The chain is tRNA (guanine-N(7)-)-methyltransferase from Buchnera aphidicola subsp. Acyrthosiphon pisum (strain Tuc7).